The sequence spans 161 residues: Phosphopantetheine adenylyltransferase (161 aa).

S10 contacts substrate. Residues 10–11 (SF) and H18 contribute to the ATP site. Substrate-binding residues include K42, A75, and R89. Residues 90–92 (GLR), E100, and 125–131 (LSPISSS) each bind ATP.

Belongs to the bacterial CoaD family. As to quaternary structure, homohexamer. The cofactor is Mg(2+).

Its subcellular location is the cytoplasm. The enzyme catalyses (R)-4'-phosphopantetheine + ATP + H(+) = 3'-dephospho-CoA + diphosphate. The protein operates within cofactor biosynthesis; coenzyme A biosynthesis; CoA from (R)-pantothenate: step 4/5. Functionally, reversibly transfers an adenylyl group from ATP to 4'-phosphopantetheine, yielding dephospho-CoA (dPCoA) and pyrophosphate. This chain is Phosphopantetheine adenylyltransferase, found in Streptococcus agalactiae serotype Ia (strain ATCC 27591 / A909 / CDC SS700).